A 284-amino-acid chain; its full sequence is 16S rRNA (guanine(1405)-N(7))-methyltransferase (284 aa).

Residues Tyr73, 111–113, Arg117, Ala142, Asp165, 191–192, Leu208, and Gln217 each bind S-adenosyl-L-methionine; these read HAS and DL.

Belongs to the methyltransferase superfamily. Aminoglycoside resistance family.

It catalyses the reaction guanosine(1405) in 16S rRNA + S-adenosyl-L-methionine = N(7)-methylguanosine(1405) in 16S rRNA + S-adenosyl-L-homocysteine. Functionally, specifically methylates the N(7) position of guanine 1405 in 16S rRNA. Confers resistance to various aminoglycosides, including gentamicin and kanamycin. This Frankia casuarinae (strain DSM 45818 / CECT 9043 / HFP020203 / CcI3) protein is 16S rRNA (guanine(1405)-N(7))-methyltransferase (Krm).